A 292-amino-acid chain; its full sequence is 4-hydroxy-tetrahydrodipicolinate synthase (292 aa).

Residue T48 coordinates pyruvate. The Proton donor/acceptor role is filled by Y136. K164 (schiff-base intermediate with substrate) is an active-site residue. I204 provides a ligand contact to pyruvate.

The protein belongs to the DapA family. As to quaternary structure, homotetramer; dimer of dimers.

It localises to the cytoplasm. The enzyme catalyses L-aspartate 4-semialdehyde + pyruvate = (2S,4S)-4-hydroxy-2,3,4,5-tetrahydrodipicolinate + H2O + H(+). It functions in the pathway amino-acid biosynthesis; L-lysine biosynthesis via DAP pathway; (S)-tetrahydrodipicolinate from L-aspartate: step 3/4. Functionally, catalyzes the condensation of (S)-aspartate-beta-semialdehyde [(S)-ASA] and pyruvate to 4-hydroxy-tetrahydrodipicolinate (HTPA). The sequence is that of 4-hydroxy-tetrahydrodipicolinate synthase from Acetivibrio thermocellus (strain ATCC 27405 / DSM 1237 / JCM 9322 / NBRC 103400 / NCIMB 10682 / NRRL B-4536 / VPI 7372) (Clostridium thermocellum).